A 61-amino-acid polypeptide reads, in one-letter code: Large ribosomal subunit protein eL29y (61 aa).

A disordered region spans residues 1 to 61 (MAKSKNHTAH…KSGENAGVEE (61 aa)). Positions 15–31 (KAHKNGIKKPRRHRHTP) are enriched in basic residues.

The protein belongs to the eukaryotic ribosomal protein eL29 family.

The polypeptide is Large ribosomal subunit protein eL29y (RPL29B) (Arabidopsis thaliana (Mouse-ear cress)).